The primary structure comprises 183 residues: Cell division protein SepF (183 aa).

Positions 149 to 183 (SSEESAAPSVMAREEEATAPAAPSPAWGTQDAING) are disordered.

This sequence belongs to the SepF family. As to quaternary structure, homodimer. Interacts with FtsZ.

The protein localises to the cytoplasm. Its function is as follows. Cell division protein that is part of the divisome complex and is recruited early to the Z-ring. Probably stimulates Z-ring formation, perhaps through the cross-linking of FtsZ protofilaments. Its function overlaps with FtsA. This chain is Cell division protein SepF, found in Synechococcus sp. (strain RCC307).